The chain runs to 333 residues: MKIIAYGARVDEIQYFKQWAKDTGNTLEYHTEFLDENTVEWAKGFDGINSLQTTPYAAGVFEKMHAYGIKFLTIRNVGTDNIDMTAMKQYGIRLSNVPAYSPAAIAEFALTDTLYLLRNMGKVQAQLQAGDYEKAGTFIGKELGQQTVGVMGTGHIGQVAIKLFKGFGAKVIAYDPYPMKGDHPDFDYVSLEDLFKQSDVIDLHVPGIEQNTHIINEAAFNLMKPGAIVINTARPNLIDTQAMLSNLKSGKLAGVGIDTYEYETEDLLNLAKHGSFKDPLWDELLGMPNVVLSPHIAYYTETAVHNMVYFSLQHLVDFLTKGETSTEVTGPAK.

Residue Tyr100 participates in 4-methyl-2-oxopentanoate binding. NAD(+) is bound by residues His155, Ile156, Asp175, Val205, Asn211, Thr232, Arg234, and Asp258. The active site involves Arg234. Glu263 is a catalytic residue. Residue His295 coordinates 4-methyl-2-oxopentanoate. His295 serves as the catalytic Proton donor.

This sequence belongs to the D-isomer specific 2-hydroxyacid dehydrogenase family. Homodimer.

It catalyses the reaction a (2R)-2-hydroxycarboxylate + NAD(+) = a 2-oxocarboxylate + NADH + H(+). The catalysed reaction is (2R)-hydroxy-4-methylpentanoate + NAD(+) = 4-methyl-2-oxopentanoate + NADH + H(+). The enzyme catalyses (R)-3-phenyllactate + NAD(+) = 3-phenylpyruvate + NADH + H(+). With respect to regulation, completely inhibited In the presence of 0.1 mM Hg(2+). No influence on the activity could be detected with Mg(2+) and Ca(2+) and only very weak effects with Cd(2+), Co(2+) and Mn(2+). Reducing agents and thiol group reagents do not affect catalytic activity. In terms of biological role, catalyzes the NADH-dependent reversible reduction of various 2-ketocarboxylic acids to the corresponding D-2-hydroxycarboxylic acids. In vitro can use various substrates, including 4-methyl-2-oxopentanoate (2-oxoisocaproate), 2-oxopentanoate, 2-oxohexanoate and phenylpyruvate. This is D-2-hydroxyacid dehydrogenase (NAD+) from Lacticaseibacillus paracasei (Lactobacillus paracasei).